The sequence spans 293 residues: Protein nud-2 (293 aa).

Residues 36-147 (EIEKMMDSEL…EKIAMLESEL (112 aa)) adopt a coiled-coil conformation. Residues 239 to 293 (KSQRVSTGTGAGACINRIVKDLMTKVERLDSILSTIRVSNNSSNNNSSHLTTTRA) are required for interaction with unc-83 isoform c.

Belongs to the nudE family. As to quaternary structure, component of a dynein-regulating complex composed of at least lis-1 and nud-2. Interacts with lis-1; the interaction is direct. Interacts (via C-terminus) with unc-83; the interaction is direct, and is required for recruitment of nud-2 to the nuclear envelope. In terms of tissue distribution, expressed in ventral cord neurons, the pharynx, seam cells of the hypodermis and in vulval muscle cells.

It is found in the nucleus envelope. Its function is as follows. Part of a complex with lis-1, which is recruited to the nuclear envelope by unc-83, where, in turn, it recruits dynein to the nuclear surface and regulates nuclear migration in hypodermal precursor cells. Plays a role in GABAergic synaptic vesicle localization in the ventral nerve cord. This is Protein nud-2 from Caenorhabditis elegans.